We begin with the raw amino-acid sequence, 150 residues long: D-aminoacyl-tRNA deacylase (150 aa).

The short motif at Gly137–Pro138 is the Gly-cisPro motif, important for rejection of L-amino acids element.

The protein belongs to the DTD family. As to quaternary structure, homodimer.

It localises to the cytoplasm. The catalysed reaction is glycyl-tRNA(Ala) + H2O = tRNA(Ala) + glycine + H(+). It carries out the reaction a D-aminoacyl-tRNA + H2O = a tRNA + a D-alpha-amino acid + H(+). In terms of biological role, an aminoacyl-tRNA editing enzyme that deacylates mischarged D-aminoacyl-tRNAs. Also deacylates mischarged glycyl-tRNA(Ala), protecting cells against glycine mischarging by AlaRS. Acts via tRNA-based rather than protein-based catalysis; rejects L-amino acids rather than detecting D-amino acids in the active site. By recycling D-aminoacyl-tRNA to D-amino acids and free tRNA molecules, this enzyme counteracts the toxicity associated with the formation of D-aminoacyl-tRNA entities in vivo and helps enforce protein L-homochirality. The chain is D-aminoacyl-tRNA deacylase from Listeria monocytogenes serotype 4b (strain CLIP80459).